Here is a 182-residue protein sequence, read N- to C-terminus: MLQPPKVLLLYAHPESQDSVANRVLLQPVQQLEHVTVHDLYAHYPDFFIDIHHEQQLLRDHQVIVFQHPLYTYSCPALLKEWLDRVLARGFANGVGGHALTGKYWRSVITTGEQEGTYRIGGYNRYPMEDILRPFELTAAMCHMHWINPMIIYWARRQKPETLASHAQAYVQWLQSPLTRGL.

Belongs to the NAD(P)H dehydrogenase (quinone) family. KefG subfamily. In terms of assembly, interacts with KefB.

Its subcellular location is the cell inner membrane. The enzyme catalyses a quinone + NADH + H(+) = a quinol + NAD(+). The catalysed reaction is a quinone + NADPH + H(+) = a quinol + NADP(+). In terms of biological role, regulatory subunit of a potassium efflux system that confers protection against electrophiles. Required for full activity of KefB. In Yersinia pseudotuberculosis serotype O:1b (strain IP 31758), this protein is Glutathione-regulated potassium-efflux system ancillary protein KefG.